Here is a 250-residue protein sequence, read N- to C-terminus: 3-deoxy-manno-octulosonate cytidylyltransferase (250 aa).

Belongs to the KdsB family.

The protein resides in the cytoplasm. It carries out the reaction 3-deoxy-alpha-D-manno-oct-2-ulosonate + CTP = CMP-3-deoxy-beta-D-manno-octulosonate + diphosphate. It participates in nucleotide-sugar biosynthesis; CMP-3-deoxy-D-manno-octulosonate biosynthesis; CMP-3-deoxy-D-manno-octulosonate from 3-deoxy-D-manno-octulosonate and CTP: step 1/1. It functions in the pathway bacterial outer membrane biogenesis; lipopolysaccharide biosynthesis. Functionally, activates KDO (a required 8-carbon sugar) for incorporation into bacterial lipopolysaccharide in Gram-negative bacteria. The polypeptide is 3-deoxy-manno-octulosonate cytidylyltransferase (Xanthomonas campestris pv. campestris (strain 8004)).